A 379-amino-acid chain; its full sequence is Endonuclease III homolog 1, chloroplastic (379 aa).

A chloroplast-targeting transit peptide spans 1 to 54 (MILLVNGGAATSIHPNAARFYRIGTMSRQIHGAVSSSKHISLKTQHPLSDSNSE). Residues 244–272 (KYDGDIPSSLDDLLSLPGIGPKMAHLILH) form the HhH domain. K265 acts as the Nucleophile; for N-glycosylase activity in catalysis. Positions 340, 347, 350, and 356 each coordinate [4Fe-4S] cluster.

It belongs to the Nth/MutY family. It depends on [4Fe-4S] cluster as a cofactor. In terms of tissue distribution, expressed at low levels in roots, stems, leaves and flowers.

The protein resides in the plastid. The protein localises to the chloroplast stroma. It localises to the chloroplast nucleoid. The catalysed reaction is 2'-deoxyribonucleotide-(2'-deoxyribose 5'-phosphate)-2'-deoxyribonucleotide-DNA = a 3'-end 2'-deoxyribonucleotide-(2,3-dehydro-2,3-deoxyribose 5'-phosphate)-DNA + a 5'-end 5'-phospho-2'-deoxyribonucleoside-DNA + H(+). Bifunctional DNA N-glycosylase with associated apurinic/apyrimidinic (AP) lyase function that catalyzes the first step in base excision repair (BER), the primary repair pathway for the repair of oxidative DNA damage. The DNA N-glycosylase activity releases the damaged DNA base from DNA by cleaving the N-glycosidic bond, leaving an AP site. The AP lyase activity cleaves the phosphodiester bond 3' to the AP site by a beta-elimination. Primarily recognizes and repairs oxidative base damage of pyrimidines. The protein is Endonuclease III homolog 1, chloroplastic of Arabidopsis thaliana (Mouse-ear cress).